The following is a 90-amino-acid chain: Probable Fe(2+)-trafficking protein (90 aa).

This sequence belongs to the Fe(2+)-trafficking protein family.

Its function is as follows. Could be a mediator in iron transactions between iron acquisition and iron-requiring processes, such as synthesis and/or repair of Fe-S clusters in biosynthetic enzymes. The chain is Probable Fe(2+)-trafficking protein from Pseudomonas fluorescens (strain ATCC BAA-477 / NRRL B-23932 / Pf-5).